The following is a 243-amino-acid chain: Small ribosomal subunit protein uS3 (243 aa).

Position 2 is an N-acetylalanine (alanine 2). Phosphoserine occurs at positions 6 and 35. The KH type-2 domain occupies 21-92; the sequence is LNEFLTRELA…SVELYAEKVA (72 aa). Threonine 42 is subject to Phosphothreonine. At lysine 62 the chain carries N6-acetyllysine. An asymmetric dimethylarginine mark is found at arginine 64, arginine 65, and arginine 67. Threonine 70 is modified (phosphothreonine). Residue lysine 90 forms a Glycyl lysine isopeptide (Lys-Gly) (interchain with G-Cter in ubiquitin) linkage. Serine 104 carries the post-translational modification Phosphoserine. N6-succinyllysine is present on lysine 132. A disordered region spans residues 200–243; it reads PKKPLPDHVSIVEPKDEILPTTPISEQKGGKPEPPAMPQPVPTA. Residue lysine 202 forms a Glycyl lysine isopeptide (Lys-Gly) (interchain with G-Cter in ubiquitin) linkage. Serine 209 is modified (phosphoserine). Lysine 214 is covalently cross-linked (Glycyl lysine isopeptide (Lys-Gly) (interchain with G-Cter in SUMO2); alternate). Residue lysine 214 forms a Glycyl lysine isopeptide (Lys-Gly) (interchain with G-Cter in ubiquitin); alternate linkage. 2 positions are modified to phosphothreonine: threonine 220 and threonine 221. Residue serine 224 is modified to Phosphoserine. Residue lysine 230 forms a Glycyl lysine isopeptide (Lys-Gly) (interchain with G-Cter in SUMO2) linkage. Residues 231–243 are compositionally biased toward pro residues; it reads PEPPAMPQPVPTA. A Phosphothreonine modification is found at threonine 242.

The protein belongs to the universal ribosomal protein uS3 family. As to quaternary structure, component of the 40S small ribosomal subunit. Identified in a IGF2BP1-dependent mRNP granule complex containing untranslated mRNAs. Interacts with HNRPD. Interacts with PRMT1; the interaction methylates RPS3. Interacts with SUMO1; the interaction sumoylates RPS3. Interacts with UBC9. Interacts with CDK1; the interaction phosphorylates RPS3. Interacts with PRKCD; the interaction phosphorylates RPS3. Interacts with PKB/AKT; the interaction phosphorylates RPS3. Interacts with E2F1; the interaction occurs in the absence of nerve growth factor and increases transcription of pro-apoptotic proteins BCL2L11/BIM and HRK/Dp5. Interacts with the base excision repair proteins APEX1 and OGG1; interaction with OGG1 increases OGG1 N-glycosylase activity. Interacts with UNG; the interaction increases the uracil excision activity of UNG1. Interacts with HSP90; the interaction prevents the ubiquitination and proteasome-dependent degradation of RPS3 and is suppressed by increased ROS levels. Interacts with TOM70; the interaction promotes translocation of RPS3 to the mitochondrion. Interacts (via N-terminus) with RELA (via N-terminus); the interaction enhances the DNA-binding activity of the NF-kappa-B p65-p50 complex. Interacts with NFKBIA; the interaction is direct and may bridge the interaction between RPS3 and RELA. Interacts with IKKB; the interaction phosphorylates RPS3 and enhances its translocation to the nucleus. Interacts (via KH domain) with MDM2 and TP53. Interacts with TRADD. Interacts with ASCC3. Identified in a HCV IRES-mediated translation complex, at least composed of EIF3C, IGF2BP1, RPS3 and HCV RNA-replicon. Interacts with CRY1. In terms of processing, methylation by PRMT1 is required for import into the nucleolus and for ribosome assembly. Sumoylation by SUMO1 enhances protein stability through increased resistance to proteolysis. Sumoylation occurs at one or more of the three consensus sites, Lys-18, Lys-214 and Lys-230. Post-translationally, phosphorylation at Thr-221 by CDK1 occurs mainly in G2/M phase. Phosphorylation by PRKCD occurs on a non-ribosomal-associated form which results in translocation of RPS3 to the nucleus and enhances its endonuclease activity. Phosphorylated on Ser-209 by IKKB in response to activation of the NF-kappa-B p65-p50 complex which enhances the association of RPS3 with importin-alpha and mediates the nuclear translocation of RPS3. Phosphorylation by MAPK is required for translocation to the nucleus following exposure of cells to DNA damaging agents such as hydrogen peroxide. Phosphorylation by PKB/AKT mediates RPS3 nuclear translocation, enhances RPS3 endonuclease activity and suppresses RPS3-induced neuronal apoptosis. In terms of processing, ubiquitinated; ubiquitination is prevented by interaction with HSP90 which stabilizes the protein. Monoubiquitinated at Lys-214 by RNF10 and ZNF598 when a ribosome has stalled during translation of poly(A) sequences, leading to preclude synthesis of a long poly-lysine tail and initiate the ribosome quality control (RQC) pathway to degrade the potentially detrimental aberrant nascent polypeptide. Deubiquitinated at Lys-214 by USP10, preventing degradation by the proteasome and promoting 40S ribosome subunit recycling following ribosome dissociation. Ufmylated by UFL1.

The protein resides in the cytoplasm. Its subcellular location is the nucleus. It is found in the nucleolus. It localises to the mitochondrion inner membrane. The protein localises to the cytoskeleton. The protein resides in the spindle. The catalysed reaction is 2'-deoxyribonucleotide-(2'-deoxyribose 5'-phosphate)-2'-deoxyribonucleotide-DNA = a 3'-end 2'-deoxyribonucleotide-(2,3-dehydro-2,3-deoxyribose 5'-phosphate)-DNA + a 5'-end 5'-phospho-2'-deoxyribonucleoside-DNA + H(+). Endonuclease activity is inhibited by MgCl2 on apurinic/apyrimidinic DNA but not on UV-irradiated DNA. Its function is as follows. Component of the small ribosomal subunit. The ribosome is a large ribonucleoprotein complex responsible for the synthesis of proteins in the cell. Has endonuclease activity and plays a role in repair of damaged DNA. Cleaves phosphodiester bonds of DNAs containing altered bases with broad specificity and cleaves supercoiled DNA more efficiently than relaxed DNA. Displays high binding affinity for 7,8-dihydro-8-oxoguanine (8-oxoG), a common DNA lesion caused by reactive oxygen species (ROS). Has also been shown to bind with similar affinity to intact and damaged DNA. Stimulates the N-glycosylase activity of the base excision protein OGG1. Enhances the uracil excision activity of UNG1. Also stimulates the cleavage of the phosphodiester backbone by APEX1. When located in the mitochondrion, reduces cellular ROS levels and mitochondrial DNA damage. Has also been shown to negatively regulate DNA repair in cells exposed to hydrogen peroxide. Plays a role in regulating transcription as part of the NF-kappa-B p65-p50 complex where it binds to the RELA/p65 subunit, enhances binding of the complex to DNA and promotes transcription of target genes. Represses its own translation by binding to its cognate mRNA. Binds to and protects TP53/p53 from MDM2-mediated ubiquitination. Involved in spindle formation and chromosome movement during mitosis by regulating microtubule polymerization. Involved in induction of apoptosis through its role in activation of CASP8. Induces neuronal apoptosis by interacting with the E2F1 transcription factor and acting synergistically with it to up-regulate pro-apoptotic proteins BCL2L11/BIM and HRK/Dp5. Interacts with TRADD following exposure to UV radiation and induces apoptosis by caspase-dependent JNK activation. The protein is Small ribosomal subunit protein uS3 (RPS3) of Oryctolagus cuniculus (Rabbit).